The following is a 637-amino-acid chain: MATEKPKKRSPRAWDTLNPPLSEWIRDAVATMGFDQMTPVQAATLPHFMGNKDVVVEAVTGSGKTLAFLIPLVQKLLRLSEPTKKHHVAAIIVSPTRELAAQIHTVLMKLLQFHEASAEILPHLKDDDEKRPFTTVPAIVPQLLVGGTTTTVQDLRFFLRHSPNVLISSPGRLVELMSSPHVHCPQSSFEVLVLDEADRLLDLGFKPDLQKILSHLPKQRRTGLFSASVSEAVGEIIRVGLRNPVKIEVKVKIKGGGILEDRKTPASLQMTYMVKPASQKLPALAELLRQLPVRPQRSIVFLSTCAAVDYFQHILPLILPEGFALVPLHGKHAAKVREKNFNKFLSSVSPTILLTTDLAARGLDIPQVDLVVQIDAPSDPKVFIHRSGRAGRAGRKGLAVVMLHPGREEDYVQFLEIRKTPIAPLEKPTITTSEDDAAEFAKKTRDFVLTDRGLFDKAQKAFVSWARSYGAHQATSIFRAADLDWADLGNAWGLLRMPRMPELKGWTGDKMCGLEIDWDNYAYKEKTREQQRKVALEEEKSGVKKQDKSEEFKRKRKNNEAWSAKHEKEDDRVERREKRRKRRDAEATSKMTDDEKVKQMELNDLIAEVRRQNREKAAAEAAAAKQEKDGEFKGFDD.

The Q motif signature appears at 14 to 42 (WDTLNPPLSEWIRDAVATMGFDQMTPVQA). In terms of domain architecture, Helicase ATP-binding spans 45 to 247 (LPHFMGNKDV…RVGLRNPVKI (203 aa)). Residue 58 to 65 (AVTGSGKT) participates in ATP binding. Positions 195 to 198 (DEAD) match the DEAD box motif. Positions 283–438 (ALAELLRQLP…TITTSEDDAA (156 aa)) constitute a Helicase C-terminal domain. Residues 524–631 (KEKTREQQRK…AAAKQEKDGE (108 aa)) are a coiled coil. Basic and acidic residues-rich tracts occupy residues 535–553 (ALEE…EEFK), 563–576 (SAKH…VERR), 583–618 (RDAE…EKAA), and 625–637 (KQEK…GFDD). A disordered region spans residues 535 to 637 (ALEEEKSGVK…KDGEFKGFDD (103 aa)).

Belongs to the DEAD box helicase family. DDX55/SPB4 subfamily. As to quaternary structure, component of pre-60S ribosomal complexes.

It localises to the nucleus. The protein localises to the nucleolus. The catalysed reaction is ATP + H2O = ADP + phosphate + H(+). Functionally, ATP-binding RNA helicase involved in the biogenesis of 60S ribosomal subunits. Binds 90S pre-ribosomal particles and dissociates from pre-60S ribosomal particles after processing of 27SB pre-rRNA. Required for the normal formation of 18S rRNA through the processing of pre-rRNAs at sites A0, A1 and A2, and the normal formation of 25S and 5.8S rRNAs through the processing of pre-rRNAs at sites C1 and C2. In Gibberella zeae (strain ATCC MYA-4620 / CBS 123657 / FGSC 9075 / NRRL 31084 / PH-1) (Wheat head blight fungus), this protein is ATP-dependent rRNA helicase SPB4.